The following is a 199-amino-acid chain: dITP/XTP pyrophosphatase (199 aa).

Position 12 to 17 (S12 to K17) interacts with substrate. D73 (proton acceptor) is an active-site residue. D73 contacts Mg(2+). Substrate contacts are provided by residues S74, F157–D160, K180, and H185–R186.

This sequence belongs to the HAM1 NTPase family. Homodimer. It depends on Mg(2+) as a cofactor.

The enzyme catalyses XTP + H2O = XMP + diphosphate + H(+). It catalyses the reaction dITP + H2O = dIMP + diphosphate + H(+). The catalysed reaction is ITP + H2O = IMP + diphosphate + H(+). Pyrophosphatase that catalyzes the hydrolysis of nucleoside triphosphates to their monophosphate derivatives, with a high preference for the non-canonical purine nucleotides XTP (xanthosine triphosphate), dITP (deoxyinosine triphosphate) and ITP. Seems to function as a house-cleaning enzyme that removes non-canonical purine nucleotides from the nucleotide pool, thus preventing their incorporation into DNA/RNA and avoiding chromosomal lesions. The polypeptide is dITP/XTP pyrophosphatase (Neisseria meningitidis serogroup A / serotype 4A (strain DSM 15465 / Z2491)).